The primary structure comprises 221 residues: Serine/arginine-rich splicing factor 2 (221 aa).

An N-acetylserine modification is found at S2. Position 2 is a phosphoserine (S2). An RRM domain is found at 14-92; sequence TSLKVDNLTY…RELRVQMARY (79 aa). Phosphothreonine is present on residues T22 and T25. At S26 the chain carries Phosphoserine. At K52 the chain carries N6-acetyllysine. A disordered region spans residues 92–221; that stretch reads YGRPPDSHHS…SPEEEGAVSS (130 aa). Basic residues-rich tracts occupy residues 117-171 and 179-189; these read RRSR…RSKS and SRSRSRSRSRS. Phosphoserine occurs at positions 189, 191, 204, 206, 208, 212, and 220.

Belongs to the splicing factor SR family. As to quaternary structure, in vitro, self-associates and binds SRSF1/SFRS1 (ASF/SF2), SNRNP70 and U2AF1 but not U2AF2. Binds SREK1/SFRS12. Interacts with CCNL1 and CCNL2. Interacts with SCAF11. Interacts with ZRSR2/U2AF1-RS2. Interacts with CCDC55 (via C-terminus). Interacts with BRDT. Extensively phosphorylated on serine residues in the RS domain. Phosphorylated by SRPK2 and this causes its redistribution from the nuclear speckle to nucleoplasm and controls cell fate decision in response to cisplatin treatment. KAT5/TIP60 inhibits its phosphorylation by preventing SRPK2 nuclear translocation. Post-translationally, acetylation on Lys-52 by KAT5/TIP60 promotes its proteasomal degradation. This effect is counterbalanced by HDAC6, which positively controls SRSF2 protein level by deacetylating it and preventing its proteasomal degradation.

The protein localises to the nucleus. It is found in the nucleoplasm. Its subcellular location is the nucleus speckle. Necessary for the splicing of pre-mRNA. It is required for formation of the earliest ATP-dependent splicing complex and interacts with spliceosomal components bound to both the 5'- and 3'-splice sites during spliceosome assembly. It also is required for ATP-dependent interactions of both U1 and U2 snRNPs with pre-mRNA. Interacts with other spliceosomal components, via the RS domains, to form a bridge between the 5'- and 3'-splice site binding components, U1 snRNP and U2AF. Binds to purine-rich RNA sequences, either 5'-AGSAGAGTA-3' (S=C or G) or 5'-GTTCGAGTA-3'. Can bind to beta-globin mRNA and commit it to the splicing pathway. The phosphorylated form (by SRPK2) is required for cellular apoptosis in response to cisplatin treatment. The protein is Serine/arginine-rich splicing factor 2 (SRSF2) of Sus scrofa (Pig).